Consider the following 1245-residue polypeptide: ABC transporter B family member 13 (1245 aa).

The span at 1-14 shows a compositional bias: polar residues; it reads MDNTERSSNGNIQA. The interval 1 to 20 is disordered; it reads MDNTERSSNGNIQAETEAKE. The 290-residue stretch at 47–336 folds into the ABC transmembrane type-1 1 domain; sequence MLLGGLGACI…AAPSLSAIAK (290 aa). Residues 48–68 form a helical membrane-spanning segment; it reads LLGGLGACIHGATLPLFFVFF. N-linked (GlcNAc...) asparagine glycosylation occurs at asparagine 77. A run of 5 helical transmembrane segments spans residues 94 to 114, 171 to 191, 195 to 215, 276 to 296, and 314 to 334; these read LYLV…VSCW, HVLR…LSVW, LLTL…AIVM, LGVG…LWYA, and ILNV…LSAI. Residues asparagine 351 and asparagine 391 are each glycosylated (N-linked (GlcNAc...) asparagine). The 236-residue stretch at 372 to 607 folds into the ABC transporter 1 domain; it reads IEFQKVSFAY…GGDYATLVNC (236 aa). 406-413 contributes to the ATP binding site; the sequence is GPSGSGKS. Residues 610 to 629 show a composition bias toward polar residues; sequence TEPQENSRSIMSETCKSQAG. Residues 610–660 are disordered; that stretch reads TEPQENSRSIMSETCKSQAGSSSSRRVSSSRRTSSFRVDQEKTKNDDSKKD. Residues 630-646 are compositionally biased toward low complexity; it reads SSSSRRVSSSRRTSSFR. Positions 647 to 660 are enriched in basic and acidic residues; it reads VDQEKTKNDDSKKD. The region spanning 681-969 is the ABC transmembrane type-1 2 domain; that stretch reads ALLGSIGAVL…TLALTPDIVK (289 aa). Helical transmembrane passes span 686 to 706 and 725 to 745; these read IGAV…AYVL and AIIF…QHYF. N-linked (GlcNAc...) asparagine glycosylation is present at asparagine 778. Helical transmembrane passes span 805–822, 828–848, 913–933, and 947–967; these read IVQN…AFFY, AVVT…QLFL, LSQF…SVLI, and FMVL…TPDI. The 237-residue stretch at 1004 to 1240 folds into the ABC transporter 2 domain; it reads IEFRNVSFVY…PNGFYKQLTS (237 aa). An N-linked (GlcNAc...) asparagine glycan is attached at asparagine 1008. 1039 to 1046 lines the ATP pocket; that stretch reads GPSGSGKS. A glycan (N-linked (GlcNAc...) asparagine) is linked at asparagine 1106.

It belongs to the ABC transporter superfamily. ABCB family. Multidrug resistance exporter (TC 3.A.1.201) subfamily.

Its subcellular location is the membrane. The polypeptide is ABC transporter B family member 13 (ABCB13) (Arabidopsis thaliana (Mouse-ear cress)).